A 346-amino-acid polypeptide reads, in one-letter code: 4-hydroxy-3-methylbut-2-enyl diphosphate reductase (346 aa).

C19 serves as a coordination point for [4Fe-4S] cluster. Positions 48 and 84 each coordinate (2E)-4-hydroxy-3-methylbut-2-enyl diphosphate. H48 and H84 together coordinate dimethylallyl diphosphate. The isopentenyl diphosphate site is built by H48 and H84. Residue C106 coordinates [4Fe-4S] cluster. H134 provides a ligand contact to (2E)-4-hydroxy-3-methylbut-2-enyl diphosphate. H134 lines the dimethylallyl diphosphate pocket. An isopentenyl diphosphate-binding site is contributed by H134. E136 serves as the catalytic Proton donor. T175 lines the (2E)-4-hydroxy-3-methylbut-2-enyl diphosphate pocket. C205 is a binding site for [4Fe-4S] cluster. (2E)-4-hydroxy-3-methylbut-2-enyl diphosphate contacts are provided by S233, S234, N235, and S278. S233, S234, N235, and S278 together coordinate dimethylallyl diphosphate. 4 residues coordinate isopentenyl diphosphate: S233, S234, N235, and S278.

It belongs to the IspH family. The cofactor is [4Fe-4S] cluster.

The catalysed reaction is isopentenyl diphosphate + 2 oxidized [2Fe-2S]-[ferredoxin] + H2O = (2E)-4-hydroxy-3-methylbut-2-enyl diphosphate + 2 reduced [2Fe-2S]-[ferredoxin] + 2 H(+). The enzyme catalyses dimethylallyl diphosphate + 2 oxidized [2Fe-2S]-[ferredoxin] + H2O = (2E)-4-hydroxy-3-methylbut-2-enyl diphosphate + 2 reduced [2Fe-2S]-[ferredoxin] + 2 H(+). The protein operates within isoprenoid biosynthesis; dimethylallyl diphosphate biosynthesis; dimethylallyl diphosphate from (2E)-4-hydroxy-3-methylbutenyl diphosphate: step 1/1. It functions in the pathway isoprenoid biosynthesis; isopentenyl diphosphate biosynthesis via DXP pathway; isopentenyl diphosphate from 1-deoxy-D-xylulose 5-phosphate: step 6/6. Its function is as follows. Catalyzes the conversion of 1-hydroxy-2-methyl-2-(E)-butenyl 4-diphosphate (HMBPP) into a mixture of isopentenyl diphosphate (IPP) and dimethylallyl diphosphate (DMAPP). Acts in the terminal step of the DOXP/MEP pathway for isoprenoid precursor biosynthesis. The sequence is that of 4-hydroxy-3-methylbut-2-enyl diphosphate reductase from Brucella suis biovar 1 (strain 1330).